A 67-amino-acid chain; its full sequence is Large ribosomal subunit protein bL35 (67 aa).

A disordered region spans residues 1 to 20; it reads MPKLKTKSGAKKRFVPKKSG.

This sequence belongs to the bacterial ribosomal protein bL35 family.

This Anaeromyxobacter dehalogenans (strain 2CP-C) protein is Large ribosomal subunit protein bL35.